The primary structure comprises 167 residues: Aphrodisin (167 aa).

The signal sequence occupies residues 1–16 (MVKILVLALVFSLAHA). The residue at position 17 (glutamine 17) is a Pyrrolidone carboxylic acid. Disulfide bonds link cysteine 54–cysteine 58 and cysteine 73–cysteine 165. Residues asparagine 57 and asparagine 85 are each glycosylated (N-linked (GlcNAc...) asparagine).

This sequence belongs to the calycin superfamily. Lipocalin family. Expressed in the vagina, uterus, and Bartholin's glands of female hamsters. Secreted in vaginal discharge.

It localises to the secreted. In terms of biological role, acts as an aphrodisiac pheromone, reliably eliciting copulatory behavior from male hamster. The protein is Aphrodisin of Mesocricetus auratus (Golden hamster).